A 415-amino-acid polypeptide reads, in one-letter code: Proline-serine-threonine phosphatase-interacting protein 1 (415 aa).

One can recognise an F-BAR domain in the interval 5–264 (LQFRDAFWCR…TLEGCDVEGD (260 aa)). Coiled-coil stretches lie at residues 94 to 133 (LALA…KLSL) and 162 to 215 (SANG…TCEA). Serine 318 carries the phosphoserine modification. A Phosphotyrosine; by ABL1 modification is found at tyrosine 344. Residues 358–415 (SSAQDYRALYDYTAQNSDELDISAGDILAVILEGEDGWWTVERNGQRGFVPGSYLEKL) form the SH3 domain.

As to quaternary structure, homodimer. Homotrimer. Interacts (via coiled-coil domain) with CD2AP, PTPN12 and PTPN18. Interacts (via SH3 domain) with ABL1 and WAS. Interacts (via SH3 and coiled-coil domains) with MEFV (via B-box zinc finger); the interaction allows binding of MEFV to PYCARD and facilitates formation of PYCARD pyroptosomes. Interacts with DNM2 and FASLG. Interacts with CD2. Dephosphorylated on Tyr-344 by PTPN18, this event negatively regulates the association of PSTPIP1 with SH2 domain-containing proteins as tyrosine kinase. Phosphorylation of Tyr-344 is probably required for subsequent phosphorylation at other tyrosine residues. Phosphorylation is induced by activation of the EGFR and PDGFR in a ABL1 dependent manner. The phosphorylation regulates the interaction with WAS and with MEFV. Highly expressed in adult lung and spleen, and weakly expressed in testis, muscle, kidney, brain and heart. Highly expressed in spleen and thymus, moderately in lung, brain and muscle, and weakly expressed in heart and liver (at protein level).

Its subcellular location is the cytoplasm. It localises to the perinuclear region. The protein resides in the cell projection. The protein localises to the lamellipodium. It is found in the cleavage furrow. Its subcellular location is the cytoskeleton. It localises to the cell membrane. The protein resides in the uropodium. Its function is as follows. Involved in regulation of the actin cytoskeleton. May regulate WAS actin-bundling activity. Bridges the interaction between ABL1 and PTPN18 leading to ABL1 dephosphorylation. May play a role as a scaffold protein between PTPN12 and WAS and allow PTPN12 to dephosphorylate WAS. Has the potential to physically couple CD2 and CD2AP to WAS. Acts downstream of CD2 and CD2AP to recruit WAS to the T-cell:APC contact site so as to promote the actin polymerization required for synapse induction during T-cell activation. Down-regulates CD2-stimulated adhesion through the coupling of PTPN12 to CD2. Also has a role in innate immunity and the inflammatory response. Recruited to inflammasomes by MEFV. Induces formation of pyroptosomes, large supramolecular structures composed of oligomerized PYCARD dimers which form prior to inflammatory apoptosis. Binding to MEFV allows MEFV to bind to PYCARD and facilitates pyroptosome formation. Regulates endocytosis and cell migration in neutrophils. This Mus musculus (Mouse) protein is Proline-serine-threonine phosphatase-interacting protein 1 (Pstpip1).